The following is a 352-amino-acid chain: N-acetyl-gamma-glutamyl-phosphate reductase (352 aa).

The active site involves Cys155.

The protein belongs to the NAGSA dehydrogenase family. Type 1 subfamily.

Its subcellular location is the cytoplasm. It carries out the reaction N-acetyl-L-glutamate 5-semialdehyde + phosphate + NADP(+) = N-acetyl-L-glutamyl 5-phosphate + NADPH + H(+). It functions in the pathway amino-acid biosynthesis; L-arginine biosynthesis; N(2)-acetyl-L-ornithine from L-glutamate: step 3/4. Catalyzes the NADPH-dependent reduction of N-acetyl-5-glutamyl phosphate to yield N-acetyl-L-glutamate 5-semialdehyde. The chain is N-acetyl-gamma-glutamyl-phosphate reductase from Crocosphaera subtropica (strain ATCC 51142 / BH68) (Cyanothece sp. (strain ATCC 51142)).